Consider the following 422-residue polypeptide: Keratin, type II cytoskeletal 80 (422 aa).

Positions 1 to 82 are head; sequence MACRSCVVGF…DPAIQQQKNN (82 aa). Ser45 carries the phosphoserine modification. The coil 1A stretch occupies residues 83–118; sequence EKEEMKVLNDKFASLIGKVQALEQRNQLLETRWHFL. The region spanning 83 to 394 is the IF rod domain; sequence EKEEMKVLND…KLMEGEESRM (312 aa). The tract at residues 119-135 is linker 1; it reads QSQDSATFDLGHLYEEY. A coil 1B region spans residues 136–227; that stretch reads QGRLQEELRK…SIYEQELKDL (92 aa). A linker 12 region spans residues 228–251; sequence AAQLKDVSVTVGMDSRCHIDLSGI. Residues 252–390 form a coil 2 region; it reads VEEVKAQYDA…ATYRKLMEGE (139 aa). The tail stretch occupies residues 391 to 422; the sequence is ESRMDMPSATVVSAVQARCRTAPTLPHPLCSL.

This sequence belongs to the intermediate filament family. Heterotetramer of two type I and two type II keratins.

This is Keratin, type II cytoskeletal 80 (KRT80) from Bos taurus (Bovine).